Here is a 1170-residue protein sequence, read N- to C-terminus: Probable mRNA-capping enzyme (1170 aa).

The active-site N6-GMP-lysine intermediate is the lysine 292. Residues 684 to 1007 (SNAAGMRAFN…LNRYYVFRKT (324 aa)) enclose the mRNA cap 0 methyltransferase domain. 693–694 (NN) contacts mRNA. S-adenosyl-L-methionine contacts are provided by residues lysine 697, glycine 715, aspartate 737, and 813-815 (QFT).

The protein in the N-terminal section; belongs to the dsDNA virus mRNA guanylyltransferase family. This sequence in the C-terminal section; belongs to the class I-like SAM-binding methyltransferase superfamily. mRNA cap 0 methyltransferase family.

Its subcellular location is the virion. It catalyses the reaction a 5'-end triphospho-ribonucleoside in mRNA + H2O = a 5'-end diphospho-ribonucleoside in mRNA + phosphate + H(+). The catalysed reaction is a 5'-end diphospho-ribonucleoside in mRNA + GTP + H(+) = a 5'-end (5'-triphosphoguanosine)-ribonucleoside in mRNA + diphosphate. It carries out the reaction a 5'-end (5'-triphosphoguanosine)-ribonucleoside in mRNA + S-adenosyl-L-methionine = a 5'-end (N(7)-methyl 5'-triphosphoguanosine)-ribonucleoside in mRNA + S-adenosyl-L-homocysteine. Its pathway is mRNA processing; mRNA capping. Its function is as follows. Responsible for methylating the 5'-cap structure of mRNAs. In Acanthamoeba polyphaga mimivirus (APMV), this protein is Probable mRNA-capping enzyme.